A 941-amino-acid polypeptide reads, in one-letter code: MTVDYKNTLNLPETSFPMRGDLAKREPDMLKNWYEKNLYQKIRKASKGKKSFILHDGPPYANGNIHIGHAVNKILKDIIIKSKTALGFDSPYIPGWDCHGLPIELKVEGLVGKPNEKISAAEFRQKCREYASEQVEGQKKDFIRLGVLGDWDNPYLTMNFDTEANIIRTLGKVIENGHLYKGSKPVHWCLDCGSSLAEAEVEYEDKVSPSIYVRFPAESAVEIEAKFSAQGRGQGKLSAIIWTTTPWTMPSNRAIAVNADLEYNLVQLGDERVILAAELVESVAKAVGVEQVEILGSVKGADLELSRFHHPFYDFTVPVILGDHVTTDGGTGLVHTAPDHGLDDFIVGKQYDLPMAGLVSNDGKFISTTEFFAGKGVFEANPLVIEKLQEVGNLLKVEKIKHSYPHCWRHKTPIIFRATPQWFIGMETQGLRQQALGEIKQVRWIPDWGQARIEKMVENRPDWCISRQRTWGVPMTLFVHKETEELHPRTLELLEEVAKRVERAGIQAWWDLDEKELLGADAETYRKVPDTLDVWFDSGSTYSSVVANRLEFNGQDIDMYLEGSDQHRGWFMSSLMLSTATNSKAPYKQVLTHGFTVDGQGRKMSKSIGNIVTPQEVMDKFGGDILRLWVASTDYTGEMTVSDEILKRAADSYRRIRNTARFLLANLNGFDPKRDLVKPEEMISLDRWAVACALDAQNEIKDAYDNYQFHTVVQRLMRFCSVEMGSFYLDIIKDRQYTTKADSLARRSCQTALWHIAEALVRWMAPILSFTADEIWQHLPQTESARAEFVFTEEFYQGLFGLGEDEKLDDAYWQQLIKVRSEVNRVLEISRNNKEIGGGLEAEVTVYANDEYRALLAQLGNELRFVLITSKVDVKSLSEKPADLADSELEGIAVSVTRSNAEKCPRCWHYSDEIGVSPGHPTLCARCVENVVGNGEVRYFA.

A 'HIGH' region motif is present at residues 59–69; that stretch reads PYANGNIHIGH. Glu562 serves as a coordination point for L-isoleucyl-5'-AMP. The short motif at 603–607 is the 'KMSKS' region element; the sequence is KMSKS. Lys606 is an ATP binding site. Cys904, Cys907, Cys924, and Cys927 together coordinate Zn(2+).

This sequence belongs to the class-I aminoacyl-tRNA synthetase family. IleS type 1 subfamily. As to quaternary structure, monomer. Zn(2+) serves as cofactor.

It is found in the cytoplasm. The enzyme catalyses tRNA(Ile) + L-isoleucine + ATP = L-isoleucyl-tRNA(Ile) + AMP + diphosphate. Its function is as follows. Catalyzes the attachment of isoleucine to tRNA(Ile). As IleRS can inadvertently accommodate and process structurally similar amino acids such as valine, to avoid such errors it has two additional distinct tRNA(Ile)-dependent editing activities. One activity is designated as 'pretransfer' editing and involves the hydrolysis of activated Val-AMP. The other activity is designated 'posttransfer' editing and involves deacylation of mischarged Val-tRNA(Ile). This Haemophilus influenzae (strain 86-028NP) protein is Isoleucine--tRNA ligase.